The primary structure comprises 442 residues: uncharacterized protein (442 aa).

This is an uncharacterized protein from Sputnik virophage.